The chain runs to 446 residues: Phosphoglucosamine mutase (446 aa).

The active-site Phosphoserine intermediate is the serine 103. Mg(2+) is bound by residues serine 103, aspartate 242, aspartate 244, and aspartate 246. Serine 103 bears the Phosphoserine mark.

The protein belongs to the phosphohexose mutase family. Requires Mg(2+) as cofactor. Activated by phosphorylation.

The enzyme catalyses alpha-D-glucosamine 1-phosphate = D-glucosamine 6-phosphate. Its function is as follows. Catalyzes the conversion of glucosamine-6-phosphate to glucosamine-1-phosphate. The sequence is that of Phosphoglucosamine mutase from Corynebacterium urealyticum (strain ATCC 43042 / DSM 7109).